We begin with the raw amino-acid sequence, 281 residues long: L-ornithine N(alpha)-acyltransferase (281 aa).

It belongs to the acetyltransferase family. OlsB subfamily.

The enzyme catalyses a (3R)-hydroxyacyl-[ACP] + L-ornithine = a lyso-ornithine lipid + holo-[ACP] + H(+). It functions in the pathway lipid metabolism. Catalyzes the first step in the biosynthesis of ornithine lipids, which are phosphorus-free membrane lipids. Catalyzes the 3-hydroxyacyl-acyl carrier protein-dependent acylation of ornithine to form lyso-ornithine lipid (LOL). The polypeptide is L-ornithine N(alpha)-acyltransferase (Brucella abortus (strain 2308)).